The sequence spans 238 residues: Aspartate/glutamate leucyltransferase (238 aa).

This sequence belongs to the R-transferase family. Bpt subfamily.

It localises to the cytoplasm. It catalyses the reaction N-terminal L-glutamyl-[protein] + L-leucyl-tRNA(Leu) = N-terminal L-leucyl-L-glutamyl-[protein] + tRNA(Leu) + H(+). The enzyme catalyses N-terminal L-aspartyl-[protein] + L-leucyl-tRNA(Leu) = N-terminal L-leucyl-L-aspartyl-[protein] + tRNA(Leu) + H(+). In terms of biological role, functions in the N-end rule pathway of protein degradation where it conjugates Leu from its aminoacyl-tRNA to the N-termini of proteins containing an N-terminal aspartate or glutamate. The polypeptide is Aspartate/glutamate leucyltransferase (Shewanella sp. (strain MR-7)).